Consider the following 335-residue polypeptide: Fructose-1,6-bisphosphatase class 1 (335 aa).

Positions 91, 113, 115, and 116 each coordinate Mg(2+). Substrate is bound by residues 116–119 (DGSS), Asn208, and Lys274. Position 280 (Glu280) interacts with Mg(2+).

It belongs to the FBPase class 1 family. Homotetramer. Mg(2+) serves as cofactor.

Its subcellular location is the cytoplasm. The catalysed reaction is beta-D-fructose 1,6-bisphosphate + H2O = beta-D-fructose 6-phosphate + phosphate. It functions in the pathway carbohydrate biosynthesis; gluconeogenesis. The protein is Fructose-1,6-bisphosphatase class 1 of Chromobacterium violaceum (strain ATCC 12472 / DSM 30191 / JCM 1249 / CCUG 213 / NBRC 12614 / NCIMB 9131 / NCTC 9757 / MK).